A 472-amino-acid polypeptide reads, in one-letter code: MSNMEHDRWSRVKGRLRSSVGEDVYSSWFARMDLEAVQQESVHLSVPTRFLKSWIQTHYSEKVLTCWQAEMPEVCRIDLTVRSPMRAAVTKEAPAPAEHRRDEHRPAADARSHAAAPAPSNHDALGGSPLDPRLTFASFVVGRSNTLAHAAAKQVAEGRRGDPVMFNPLYIHSGVGLGKTHLLQAVTWAGNSGTERKVLYLTAEKFMYGFVASLKTQTSLAFKEALRGIDVLVIDDLQFLQGKTTQAEFCHTLNALIDAGRQVVVAADRPPADLESLDERVRSRLAGGLVVEMAPLGEELRLGILKSRVVAARTHHASFDVPQSVLEYLARAITHNGRDLEGAINRLLAHSKLNAQPVTLEMAEHEVRDLIRPQEPKRIKIEDIQRVVARQYNVSRSDLLSSRRTANVVRPRQVAMYLAKTLTLRSLPEIGRRFGGRDHTTVLHAVRKIEGLVSKDVTLSDEVESLKRQLQE.

A domain I, interacts with DnaA modulators region spans residues 1–73 (MSNMEHDRWS…LTCWQAEMPE (73 aa)). The interval 73–128 (EVCRIDLTVRSPMRAAVTKEAPAPAEHRRDEHRPAADARSHAAAPAPSNHDALGGS) is domain II. The segment at 89-127 (VTKEAPAPAEHRRDEHRPAADARSHAAAPAPSNHDALGG) is disordered. Basic and acidic residues predominate over residues 97 to 112 (AEHRRDEHRPAADARS). Over residues 113–124 (HAAAPAPSNHDA) the composition is skewed to low complexity. The interval 129-351 (PLDPRLTFAS…GAINRLLAHS (223 aa)) is domain III, AAA+ region. ATP contacts are provided by glycine 176, glycine 178, lysine 179, and threonine 180. The interval 352–472 (KLNAQPVTLE…VESLKRQLQE (121 aa)) is domain IV, binds dsDNA.

Belongs to the DnaA family. In terms of assembly, oligomerizes as a right-handed, spiral filament on DNA at oriC.

Its subcellular location is the cytoplasm. In terms of biological role, plays an essential role in the initiation and regulation of chromosomal replication. ATP-DnaA binds to the origin of replication (oriC) to initiate formation of the DNA replication initiation complex once per cell cycle. Binds the DnaA box (a 9 base pair repeat at the origin) and separates the double-stranded (ds)DNA. Forms a right-handed helical filament on oriC DNA; dsDNA binds to the exterior of the filament while single-stranded (ss)DNA is stabiized in the filament's interior. The ATP-DnaA-oriC complex binds and stabilizes one strand of the AT-rich DNA unwinding element (DUE), permitting loading of DNA polymerase. After initiation quickly degrades to an ADP-DnaA complex that is not apt for DNA replication. Binds acidic phospholipids. The protein is Chromosomal replication initiator protein DnaA of Rhodopseudomonas palustris (strain BisB5).